The primary structure comprises 465 residues: Endo-1,3-1,4-beta-glycanase ExsH (465 aa).

Hemolysin-type calcium-binding repeat units follow at residues 33–50 (HGTA…VNVT), 105–122 (FGNE…TQTI), and 123–140 (DGRG…ADTF). Positions 206-462 (AHQFRLSLDR…YIKAYSLDAD (257 aa)) constitute a GH16 domain. E349 (nucleophile) is an active-site residue. The active-site Proton donor is E354.

This sequence belongs to the glycosyl hydrolase 16 family.

The protein resides in the secreted. Its pathway is glycan metabolism; exopolysaccharide biosynthesis. In terms of biological role, cleaves high molecular weight succinoglycan to yield LMW succinoglycan. Dynamically regulates the molecular weight distribution of succinoglycan by cleaving nascent succinoglycan only during a limited period after its synthesis, perhaps before it undergoes a time-dependent change in its conformation or aggregation state. This is Endo-1,3-1,4-beta-glycanase ExsH (exsH) from Rhizobium meliloti (strain 1021) (Ensifer meliloti).